The sequence spans 212 residues: Dephospho-CoA kinase (212 aa).

The region spanning Leu8 to Arg212 is the DPCK domain. Gly16–Met21 contacts ATP.

Belongs to the CoaE family.

Its subcellular location is the cytoplasm. It catalyses the reaction 3'-dephospho-CoA + ATP = ADP + CoA + H(+). It participates in cofactor biosynthesis; coenzyme A biosynthesis; CoA from (R)-pantothenate: step 5/5. Catalyzes the phosphorylation of the 3'-hydroxyl group of dephosphocoenzyme A to form coenzyme A. The chain is Dephospho-CoA kinase from Chlorobium chlorochromatii (strain CaD3).